The primary structure comprises 170 residues: Cathelicidin antimicrobial peptide (170 aa).

The N-terminal stretch at Met1–Ala30 is a signal peptide. The propeptide at Gln31–Arg131 is cathelin-like domain (CLD). 2 cysteine pairs are disulfide-bonded: Cys86/Cys97 and Cys108/Cys125. Residues Phe150–Gln162 are active core.

Belongs to the cathelicidin family. As to quaternary structure, monomer, homodimer or homotrimer (in vitro). Oligomerizes as tetra- or hexamer in solution (in vitro). Post-translationally, proteolytically cleaved by proteinase PRTN3 into antibacterial peptide LL-37. Proteolytically cleaved by cathepsin CTSG and neutrophil elastase ELANE. Resistant to proteolytic degradation in solution, and when bound to both zwitterionic (mimicking mammalian membranes) and negatively charged membranes (mimicking bacterial membranes). In terms of processing, after secretion onto the skin surface, the CAMP gene product is processed by a serine protease-dependent mechanism into multiple novel antimicrobial peptides distinct from and shorter than cathelicidin LL-37. These peptides show enhanced antimicrobial action, acquiring the ability to kill skin pathogens such as S.aureus, E.coli and C.albicans. These peptides have lost the ability to stimulate CXCL8/IL8 release from keratinocytes. The peptides act synergistically, killing bacteria at lower concentrations when present together, and maintain activity at increased salt condition.

The protein localises to the secreted. It is found in the vesicle. Antimicrobial protein that is an integral component of the innate immune system. Binds to bacterial lipopolysaccharides (LPS). Acts via neutrophil N-formyl peptide receptors to enhance the release of CXCL2. Postsecretory processing generates multiple cathelicidin antimicrobial peptides with various lengths which act as a topical antimicrobial defense in sweat on skin. The unprocessed precursor form, cathelicidin antimicrobial peptide, inhibits the growth of Gram-negative E.coli and E.aerogenes with efficiencies comparable to that of the mature peptide LL-37 (in vitro). Its function is as follows. Antimicrobial peptide that is an integral component of the innate immune system. Binds to bacterial lipopolysaccharides (LPS). Causes membrane permeabilization by forming transmembrane pores (in vitro). Causes lysis of E.coli. Exhibits antimicrobial activity against Gram-negative bacteria such as P.aeruginosa, S.typhimurium, E.aerogenes, E.coli and P.syringae, Gram-positive bacteria such as L.monocytogenes, S.epidermidis, S.pyogenes and S.aureus, as well as vancomycin-resistant enterococci (in vitro). Exhibits antimicrobial activity against methicillin-resistant S.aureus, P.mirabilis, and C.albicans in low-salt media, but not in media containing 100 mM NaCl (in vitro). Forms chiral supramolecular assemblies with quinolone signal (PQS) molecules of P.aeruginosa, which may lead to interference of bacterial quorum signaling and perturbance of bacterial biofilm formation. May form supramolecular fiber-like assemblies on bacterial membranes. Induces cytokine and chemokine producation as well as TNF/TNFA and CSF2/GMCSF production in normal human keratinocytes. Exhibits hemolytic activity against red blood cells. In terms of biological role, exhibits antimicrobial activity against E.coli and B.megaterium (in vitro). The chain is Cathelicidin antimicrobial peptide from Nomascus gabriellae (Red-cheeked gibbon).